The primary structure comprises 156 residues: Transmembrane protein 50 homolog (156 aa).

Helical transmembrane passes span 5–25 (IMKY…FLWI), 45–65 (IQWI…MANI), 87–107 (VWLF…LWIM), and 124–144 (PGIA…LLVF).

Belongs to the UPF0220 family.

Its subcellular location is the membrane. This is Transmembrane protein 50 homolog (tmem50) from Dictyostelium discoideum (Social amoeba).